Consider the following 157-residue polypeptide: Urease accessory protein UreE (157 aa).

Belongs to the UreE family.

It is found in the cytoplasm. Functionally, involved in urease metallocenter assembly. Binds nickel. Probably functions as a nickel donor during metallocenter assembly. The chain is Urease accessory protein UreE from Paenarthrobacter aurescens (strain TC1).